The following is a 968-amino-acid chain: RNA polymerase-associated protein RapA (968 aa).

The region spanning 164–334 is the Helicase ATP-binding domain; it reads EVGQRHAPRV…FARLRLLDPN (171 aa). 177-184 provides a ligand contact to ATP; sequence DEVGLGKT. Residues 280-283 carry the DEAH box motif; sequence DEAH. The Helicase C-terminal domain maps to 493-644; the sequence is WLVDFLLDLR…TCPTGRALYD (152 aa).

The protein belongs to the SNF2/RAD54 helicase family. RapA subfamily. In terms of assembly, interacts with the RNAP. Has a higher affinity for the core RNAP than for the holoenzyme. Its ATPase activity is stimulated by binding to RNAP.

Its function is as follows. Transcription regulator that activates transcription by stimulating RNA polymerase (RNAP) recycling in case of stress conditions such as supercoiled DNA or high salt concentrations. Probably acts by releasing the RNAP, when it is trapped or immobilized on tightly supercoiled DNA. Does not activate transcription on linear DNA. Probably not involved in DNA repair. The sequence is that of RNA polymerase-associated protein RapA from Sodalis glossinidius (strain morsitans).